The chain runs to 424 residues: Serine--tRNA ligase (424 aa).

232–234 contributes to the L-serine binding site; the sequence is TAE. An ATP-binding site is contributed by 263-265; the sequence is RRE. An L-serine-binding site is contributed by glutamate 286. Position 350–353 (350–353) interacts with ATP; sequence EISS. Serine 384 provides a ligand contact to L-serine.

Belongs to the class-II aminoacyl-tRNA synthetase family. Type-1 seryl-tRNA synthetase subfamily. Homodimer. The tRNA molecule binds across the dimer.

The protein resides in the cytoplasm. It catalyses the reaction tRNA(Ser) + L-serine + ATP = L-seryl-tRNA(Ser) + AMP + diphosphate + H(+). The enzyme catalyses tRNA(Sec) + L-serine + ATP = L-seryl-tRNA(Sec) + AMP + diphosphate + H(+). It functions in the pathway aminoacyl-tRNA biosynthesis; selenocysteinyl-tRNA(Sec) biosynthesis; L-seryl-tRNA(Sec) from L-serine and tRNA(Sec): step 1/1. Functionally, catalyzes the attachment of serine to tRNA(Ser). Is also able to aminoacylate tRNA(Sec) with serine, to form the misacylated tRNA L-seryl-tRNA(Sec), which will be further converted into selenocysteinyl-tRNA(Sec). The sequence is that of Serine--tRNA ligase from Prochlorococcus marinus subsp. pastoris (strain CCMP1986 / NIES-2087 / MED4).